The chain runs to 349 residues: ATP synthase subunit a-2 (349 aa).

Positions 1–97 (MERLTRLNHF…SNYMKLMEIP (97 aa)) are excised as a propeptide. 7 helical membrane-spanning segments follow: residues 118–138 (FSFTNSSLFMLLTLSFFLLLI), 184–204 (FFPCILVTFLFLLFCNLQGMI), 213–233 (HFLITLALSFSIFIGITIVGF), 240–260 (FFSFLLPAGVPLPLAPFLVLL), 280–300 (MMAGHSLVKILSGFAWTMLCM), 303–323 (IFYFIGALGPLFIVLALTGLE), and 326–346 (VAILQAYVFTILICIYLNDAI).

Belongs to the ATPase A chain family. As to quaternary structure, F-type ATPases have 2 components, CF(1) - the catalytic core - and CF(0) - the membrane proton channel. CF(1) has five subunits: alpha(3), beta(3), gamma(1), delta(1), epsilon(1). CF(0) has three main subunits: a, b and c.

It localises to the mitochondrion inner membrane. Functionally, mitochondrial membrane ATP synthase (F(1)F(0) ATP synthase or Complex V) produces ATP from ADP in the presence of a proton gradient across the membrane which is generated by electron transport complexes of the respiratory chain. F-type ATPases consist of two structural domains, F(1) - containing the extramembraneous catalytic core and F(0) - containing the membrane proton channel, linked together by a central stalk and a peripheral stalk. During catalysis, ATP synthesis in the catalytic domain of F(1) is coupled via a rotary mechanism of the central stalk subunits to proton translocation. Key component of the proton channel; it may play a direct role in the translocation of protons across the membrane. The polypeptide is ATP synthase subunit a-2 (ATP6-2) (Arabidopsis thaliana (Mouse-ear cress)).